The primary structure comprises 459 residues: Inositol-trisphosphate 3-kinase A (459 aa).

A disordered region spans residues 1–29 (MTLPGRPTGMARPRGAGPCSPGLERAPRR). Omega-N-methylarginine occurs at positions 35, 55, and 62. Residues 49-164 (AAAGEPRARG…TSEDVGQKSH (116 aa)) are disordered. Low complexity predominate over residues 116 to 132 (RRLSTSSLSSTGSSSLL). Residues Ser-135 and Ser-195 each carry the phosphoserine modification. Residues Ser-195, Lys-207, 247–249 (QDL), and Asp-260 contribute to the ATP site. Residues Lys-262 and Arg-283 each contribute to the substrate site. Residues 285–293 (DMYKKMLAV) are calmodulin-binding. 310–317 (KPRYMQWR) is a binding site for substrate. ATP-binding residues include Lys-334 and Asp-414. Lys-417 provides a ligand contact to substrate.

This sequence belongs to the inositol phosphokinase (IPK) family.

The protein resides in the cytoplasm. It localises to the cytoskeleton. It catalyses the reaction 1D-myo-inositol 1,4,5-trisphosphate + ATP = 1D-myo-inositol 1,3,4,5-tetrakisphosphate + ADP + H(+). With respect to regulation, activated by calcium/calmodulin. Functionally, catalyzes the phosphorylation of 1D-myo-inositol 1,4,5-trisphosphate (InsP3) into 1D-myo-inositol 1,3,4,5-tetrakisphosphate and participates to the regulation of calcium homeostasis. This is Inositol-trisphosphate 3-kinase A from Mus musculus (Mouse).